A 684-amino-acid polypeptide reads, in one-letter code: Sec1 family domain-containing protein 2 (684 aa).

Belongs to the STXBP/unc-18/SEC1 family.

In terms of biological role, may be involved in protein transport. The protein is Sec1 family domain-containing protein 2 (SCFD2) of Homo sapiens (Human).